Reading from the N-terminus, the 273-residue chain is Large ribosomal subunit protein uL2 (273 aa).

A disordered region spans residues 221–263; sequence RGTAMNPVDHPHGGGEGRNFGKHPVTPWGVQTKGKKTRHNKRT. Over residues 253-263 the composition is skewed to basic residues; it reads KGKKTRHNKRT.

The protein belongs to the universal ribosomal protein uL2 family. As to quaternary structure, part of the 50S ribosomal subunit. Forms a bridge to the 30S subunit in the 70S ribosome.

In terms of biological role, one of the primary rRNA binding proteins. Required for association of the 30S and 50S subunits to form the 70S ribosome, for tRNA binding and peptide bond formation. It has been suggested to have peptidyltransferase activity; this is somewhat controversial. Makes several contacts with the 16S rRNA in the 70S ribosome. This is Large ribosomal subunit protein uL2 from Actinobacillus succinogenes (strain ATCC 55618 / DSM 22257 / CCUG 43843 / 130Z).